The sequence spans 358 residues: MATH domain and coiled-coil domain-containing protein At3g58440 (358 aa).

Residues 8-131 (QDKFTWVLEK…NDRLTIVAEV (124 aa)) form the MATH domain. The stretch at 250–309 (LRDAGFKVDWLEKKLDQLKEKKEEEMSGLARLHEIEERLQKLKLLFVDLESQLQKEKVEA) forms a coiled coil.

The polypeptide is MATH domain and coiled-coil domain-containing protein At3g58440 (Arabidopsis thaliana (Mouse-ear cress)).